The sequence spans 1014 residues: Klotho (1014 aa).

Residues 1–34 (MPARAPPRRLPRLLLLRLLSLHLLLLTLRARCLS) form the signal peptide. Topologically, residues 35 to 983 (AEPGQGAQTW…GCGFFQTRKS (949 aa)) are extracellular. Glycosyl hydrolase-1 stretches follow at residues 59–508 (LHDT…NNGF) and 517–955 (LEGT…NNGF). 6 N-linked (GlcNAc...) asparagine glycosylation sites follow: N161, N285, N346, N609, N614, and N696. Residues 984–1004 (LLAFISFLVFAFVTSLALIYY) traverse the membrane as a helical segment. Over 1005-1014 (YSKKGRRRYK) the chain is Cytoplasmic.

Belongs to the glycosyl hydrolase 1 family. Klotho subfamily. In terms of assembly, homodimer. Interacts with FGF23 and FGFR1. N-glycosylated. As to expression, present in cortical renal tubules and the parathyroid (at protein level). Strongly expressed in kidney. Expressed at low levels in brain, lung, intestine and ovaries.

Its subcellular location is the cell membrane. It is found in the apical cell membrane. It localises to the secreted. It catalyses the reaction a beta-D-glucuronoside + H2O = D-glucuronate + an alcohol. In terms of biological role, may have weak glycosidase activity towards glucuronylated steroids. However, it lacks essential active site Glu residues at positions 241 and 874, suggesting it may be inactive as a glycosidase in vivo. May be involved in the regulation of calcium and phosphorus homeostasis by inhibiting the synthesis of active vitamin D. Essential factor for the specific interaction between FGF23 and FGFR1. The Klotho peptide generated by cleavage of the membrane-bound isoform may be an anti-aging circulating hormone which would extend life span by inhibiting insulin/IGF1 signaling. The polypeptide is Klotho (Kl) (Rattus norvegicus (Rat)).